The primary structure comprises 247 residues: Tyrosine recombinase XerD-like (247 aa).

The 72-residue stretch at Met1 to Tyr72 folds into the Core-binding (CB) domain. Residues Ser91–Leu247 enclose the Tyr recombinase domain. Residue Arg212 is part of the active site. Residue Tyr244 is the O-(3'-phospho-DNA)-tyrosine intermediate of the active site.

Belongs to the 'phage' integrase family. XerD-like subfamily.

The protein resides in the cytoplasm. Its function is as follows. Putative tyrosine recombinase. Not involved in the cutting and rejoining of the recombining DNA molecules on dif(SL) site. This chain is Tyrosine recombinase XerD-like, found in Streptococcus uberis (strain ATCC BAA-854 / 0140J).